We begin with the raw amino-acid sequence, 389 residues long: Dihydroorotase (389 aa).

Positions 51 and 53 each coordinate Zn(2+). Substrate contacts are provided by residues histidine 53–arginine 55 and asparagine 85. Zn(2+) contacts are provided by lysine 133, histidine 158, histidine 192, and aspartate 254. Residue lysine 133 is modified to N6-carboxylysine. Aspartate 254 is a catalytic residue. Residues histidine 258 and proline 272–glycine 273 contribute to the substrate site.

This sequence belongs to the metallo-dependent hydrolases superfamily. DHOase family. Class I DHOase subfamily. Zn(2+) serves as cofactor.

It catalyses the reaction (S)-dihydroorotate + H2O = N-carbamoyl-L-aspartate + H(+). It functions in the pathway pyrimidine metabolism; UMP biosynthesis via de novo pathway; (S)-dihydroorotate from bicarbonate: step 3/3. Functionally, catalyzes the reversible cyclization of carbamoyl aspartate to dihydroorotate. This Sulfurisphaera tokodaii (strain DSM 16993 / JCM 10545 / NBRC 100140 / 7) (Sulfolobus tokodaii) protein is Dihydroorotase.